We begin with the raw amino-acid sequence, 196 residues long: Imidazole glycerol phosphate synthase subunit HisH (196 aa).

Residues 2–196 (NVVILDTGCA…AKLLKNFLEM (195 aa)) form the Glutamine amidotransferase type-1 domain. Catalysis depends on Cys77, which acts as the Nucleophile. Residues His178 and Glu180 contribute to the active site.

Heterodimer of HisH and HisF.

The protein resides in the cytoplasm. The enzyme catalyses 5-[(5-phospho-1-deoxy-D-ribulos-1-ylimino)methylamino]-1-(5-phospho-beta-D-ribosyl)imidazole-4-carboxamide + L-glutamine = D-erythro-1-(imidazol-4-yl)glycerol 3-phosphate + 5-amino-1-(5-phospho-beta-D-ribosyl)imidazole-4-carboxamide + L-glutamate + H(+). It catalyses the reaction L-glutamine + H2O = L-glutamate + NH4(+). Its pathway is amino-acid biosynthesis; L-histidine biosynthesis; L-histidine from 5-phospho-alpha-D-ribose 1-diphosphate: step 5/9. IGPS catalyzes the conversion of PRFAR and glutamine to IGP, AICAR and glutamate. The HisH subunit catalyzes the hydrolysis of glutamine to glutamate and ammonia as part of the synthesis of IGP and AICAR. The resulting ammonia molecule is channeled to the active site of HisF. This is Imidazole glycerol phosphate synthase subunit HisH from Shigella dysenteriae serotype 1 (strain Sd197).